The following is a 348-amino-acid chain: Histidinol-phosphate aminotransferase (348 aa).

An N6-(pyridoxal phosphate)lysine modification is found at K207.

The protein belongs to the class-II pyridoxal-phosphate-dependent aminotransferase family. Histidinol-phosphate aminotransferase subfamily. In terms of assembly, homodimer. It depends on pyridoxal 5'-phosphate as a cofactor.

The catalysed reaction is L-histidinol phosphate + 2-oxoglutarate = 3-(imidazol-4-yl)-2-oxopropyl phosphate + L-glutamate. The protein operates within amino-acid biosynthesis; L-histidine biosynthesis; L-histidine from 5-phospho-alpha-D-ribose 1-diphosphate: step 7/9. This Crocosphaera subtropica (strain ATCC 51142 / BH68) (Cyanothece sp. (strain ATCC 51142)) protein is Histidinol-phosphate aminotransferase.